A 443-amino-acid chain; its full sequence is GPI mannosyltransferase 1 (443 aa).

11 helical membrane-spanning segments follow: residues 8-28 (PFMV…YGAW), 68-88 (PLLA…FSFG), 90-110 (ALFA…LTLT), 136-156 (TRGS…WAVL), 160-180 (IYLG…PFIY), 232-252 (LTLI…LHYG), 273-291 (FSPY…AGAV), 302-322 (FESL…PLVL), 347-367 (SQYF…SSLL), 374-394 (IAVA…GYLL), and 406-426 (LFLA…VIVA).

It belongs to the PIGM family.

It is found in the endoplasmic reticulum membrane. It functions in the pathway glycolipid biosynthesis; glycosylphosphatidylinositol-anchor biosynthesis. Mannosyltransferase involved in glycosylphosphatidylinositol-anchor biosynthesis. Transfers the first alpha-1,4-mannose to GlcN-acyl-PI during GPI precursor assembly. Required for cell wall integrity. In Emericella nidulans (strain FGSC A4 / ATCC 38163 / CBS 112.46 / NRRL 194 / M139) (Aspergillus nidulans), this protein is GPI mannosyltransferase 1 (gpi14).